A 196-amino-acid polypeptide reads, in one-letter code: ATP-dependent Clp protease proteolytic subunit (196 aa).

Ser96 acts as the Nucleophile in catalysis. His121 is a catalytic residue.

This sequence belongs to the peptidase S14 family. In terms of assembly, fourteen ClpP subunits assemble into 2 heptameric rings which stack back to back to give a disk-like structure with a central cavity, resembling the structure of eukaryotic proteasomes.

The protein resides in the cytoplasm. The enzyme catalyses Hydrolysis of proteins to small peptides in the presence of ATP and magnesium. alpha-casein is the usual test substrate. In the absence of ATP, only oligopeptides shorter than five residues are hydrolyzed (such as succinyl-Leu-Tyr-|-NHMec, and Leu-Tyr-Leu-|-Tyr-Trp, in which cleavage of the -Tyr-|-Leu- and -Tyr-|-Trp bonds also occurs).. In terms of biological role, cleaves peptides in various proteins in a process that requires ATP hydrolysis. Has a chymotrypsin-like activity. Plays a major role in the degradation of misfolded proteins. The protein is ATP-dependent Clp protease proteolytic subunit of Streptococcus suis (strain 98HAH33).